A 330-amino-acid polypeptide reads, in one-letter code: Alpha/beta hydrolase domain-containing protein VTE7 (330 aa).

An AB hydrolase-1 domain is found at 84–315 (VVLLHCFDSS…GHLPHVENPK (232 aa)). Catalysis depends on Ser157, which acts as the Nucleophile. Catalysis depends on charge relay system residues Asp279 and His307.

The protein belongs to the AB hydrolase superfamily.

The protein localises to the plastid. It localises to the chloroplast envelope. Its function is as follows. Hydrolase involved in tocopherol (vitamin E) biosynthesis. Releases prenyl alcohols from chlorophyll biosynthetic intermediates, which are then converted to the corresponding diphosphates for tocopherol biosynthesis. Provides most of the phytol from chlorophyll for tocopherol biosynthesis in seeds. The protein is Alpha/beta hydrolase domain-containing protein VTE7 of Arabidopsis thaliana (Mouse-ear cress).